The primary structure comprises 624 residues: uncharacterized protein (624 aa).

Positions 113 to 249 (SINVRTSATT…RFHPVTDINK (137 aa)) are disordered. Residues 118–225 (TSATTTESTN…ATTTESTNAS (108 aa)) show a composition bias toward low complexity. Over residues 226–249 (AKEDANKDGNAEDNRFHPVTDINK) the composition is skewed to basic and acidic residues.

This is an uncharacterized protein from Saccharomyces cerevisiae (strain ATCC 204508 / S288c) (Baker's yeast).